The chain runs to 153 residues: Ribosomal RNA large subunit methyltransferase H (153 aa).

Residues L70, G102, and 121 to 126 (LSRMTF) each bind S-adenosyl-L-methionine.

It belongs to the RNA methyltransferase RlmH family. Homodimer.

It localises to the cytoplasm. The catalysed reaction is pseudouridine(1915) in 23S rRNA + S-adenosyl-L-methionine = N(3)-methylpseudouridine(1915) in 23S rRNA + S-adenosyl-L-homocysteine + H(+). Functionally, specifically methylates the pseudouridine at position 1915 (m3Psi1915) in 23S rRNA. This is Ribosomal RNA large subunit methyltransferase H from Geotalea daltonii (strain DSM 22248 / JCM 15807 / FRC-32) (Geobacter daltonii).